The sequence spans 91 residues: Cell division topological specificity factor (91 aa).

It belongs to the MinE family.

In terms of biological role, prevents the cell division inhibition by proteins MinC and MinD at internal division sites while permitting inhibition at polar sites. This ensures cell division at the proper site by restricting the formation of a division septum at the midpoint of the long axis of the cell. This is Cell division topological specificity factor from Caldanaerobacter subterraneus subsp. tengcongensis (strain DSM 15242 / JCM 11007 / NBRC 100824 / MB4) (Thermoanaerobacter tengcongensis).